We begin with the raw amino-acid sequence, 355 residues long: Probable L-aspartate decarboxylase (355 aa).

At Lys210 the chain carries N6-(pyridoxal phosphate)lysine.

Belongs to the group II decarboxylase family. MfnA subfamily. Pyridoxal 5'-phosphate is required as a cofactor.

It catalyses the reaction L-aspartate + H(+) = beta-alanine + CO2. It participates in cofactor biosynthesis; coenzyme A biosynthesis. Its function is as follows. Catalyzes the decarboxylation of L-aspartate to produce beta-alanine. The protein is Probable L-aspartate decarboxylase of Halobacterium salinarum (strain ATCC 29341 / DSM 671 / R1).